Reading from the N-terminus, the 371-residue chain is 4-hydroxy-3-methylbut-2-en-1-yl diphosphate synthase (flavodoxin) (371 aa).

[4Fe-4S] cluster-binding residues include Cys269, Cys272, Cys304, and Glu311.

Belongs to the IspG family. The cofactor is [4Fe-4S] cluster.

The catalysed reaction is (2E)-4-hydroxy-3-methylbut-2-enyl diphosphate + oxidized [flavodoxin] + H2O + 2 H(+) = 2-C-methyl-D-erythritol 2,4-cyclic diphosphate + reduced [flavodoxin]. The protein operates within isoprenoid biosynthesis; isopentenyl diphosphate biosynthesis via DXP pathway; isopentenyl diphosphate from 1-deoxy-D-xylulose 5-phosphate: step 5/6. Its function is as follows. Converts 2C-methyl-D-erythritol 2,4-cyclodiphosphate (ME-2,4cPP) into 1-hydroxy-2-methyl-2-(E)-butenyl 4-diphosphate. The protein is 4-hydroxy-3-methylbut-2-en-1-yl diphosphate synthase (flavodoxin) of Acinetobacter baylyi (strain ATCC 33305 / BD413 / ADP1).